The primary structure comprises 632 residues: MTHEFTESYDVIVIGAGHAGVEASLATSRMGCKTLLATINLDMLAFMPCNPSIGGSAKGIVVREIDALGGEMGKNIDKTYIQMKMLNTGKGPAVRALRAQADKSLYAREMKHTVEKQANLTLRQTMIDDILVEDGRVVGVLTATGQKFAAKAVVVTTGTALRGEIILGELKYSSGPNNSLASVTLADNLKKLGLEIGRFKTGTPPRVKASSINYDQTEIQPGDDKPNHFSFMSKDADYLKDQIPCWLTYTNQTSHDIINQNLYRAPMFSGIVKGVGPRYCPSIEDKIVRFADKERHQLFLEPEGRDTEEVYVQGLSTSLPEDVQKDLIHSIKGLEKAEMMRTGYAIEYDIVLPHQLRATLETKLISGLFTAGQTNGTSGYEEAAGQGLIAGINAALKVQGKSELILKRSDAYIGVMIDDLVTKGTLEPYRLLTSRAEYRLILRHDNADMRLTEIGRDIGLVDDERWKAFEIKKNQFDNELKRLNSIKLKPVKATNDRVQELGFKPLTDAMTAKEFMRRPEIDYAIAVSFVGPAAEDLDAKIIELLETEIKYEGYIRKALDQVAKMKRMEEKRIPANIDWDAIDSIATEARQKFKKINPETIGQASRISGVNPADISILMIYLEGNGKAHRKY.

Residues 15 to 20 (GAGHAG), isoleucine 127, and serine 182 contribute to the FAD site. 276–290 (GPRYCPSIEDKIVRF) is a binding site for NAD(+). Glutamine 373 is an FAD binding site.

This sequence belongs to the MnmG family. Homodimer. Heterotetramer of two MnmE and two MnmG subunits. Requires FAD as cofactor.

The protein localises to the cytoplasm. Functionally, NAD-binding protein involved in the addition of a carboxymethylaminomethyl (cmnm) group at the wobble position (U34) of certain tRNAs, forming tRNA-cmnm(5)s(2)U34. The sequence is that of tRNA uridine 5-carboxymethylaminomethyl modification enzyme MnmG from Streptococcus pyogenes serotype M3 (strain SSI-1).